Reading from the N-terminus, the 221-residue chain is Phosphoglycolate phosphatase (221 aa).

The Nucleophile role is filled by D10. Mg(2+) contacts are provided by D10, D12, and D168.

The protein belongs to the HAD-like hydrolase superfamily. CbbY/CbbZ/Gph/YieH family. Mg(2+) is required as a cofactor.

It carries out the reaction 2-phosphoglycolate + H2O = glycolate + phosphate. It participates in organic acid metabolism; glycolate biosynthesis; glycolate from 2-phosphoglycolate: step 1/1. Its function is as follows. Specifically catalyzes the dephosphorylation of 2-phosphoglycolate. Is involved in the dissimilation of the intracellular 2-phosphoglycolate formed during the DNA repair of 3'-phosphoglycolate ends, a major class of DNA lesions induced by oxidative stress. The sequence is that of Phosphoglycolate phosphatase from Xanthomonas campestris pv. campestris (strain 8004).